The primary structure comprises 291 residues: MTHFDKPTYTVRKTRKKEIPQGVYTKDPVSGEAVFTKDIADNQMVVPASGHHFPIGARERLGYLLDPGSFVESNIEVRSADPLQFVDSAPYPARIKKYEKESGLPEAVVTGAGKIHGVPVSLAVMDFRFCGGTLGSAAGEKITRAIETAIAQKIPCIIFSTSGGARMQEGILSLMQMAKTSAALGRLAAARLPYISVLTHPTTGGVSASYATLGDVILAEPGALIGFAGPRVIKDTTKQTLPPGFQTSEFLLKHGLIDQIVPRTEMRERLHQILLALYVKQTPASASVAKS.

Positions 23–291 (VYTKDPVSGE…TPASASVAKS (269 aa)) constitute a CoA carboxyltransferase N-terminal domain.

This sequence belongs to the AccD/PCCB family. In terms of assembly, acetyl-CoA carboxylase is a heterohexamer composed of biotin carboxyl carrier protein (AccB), biotin carboxylase (AccC) and two subunits each of ACCase subunit alpha (AccA) and ACCase subunit beta (AccD).

Its subcellular location is the cytoplasm. It catalyses the reaction N(6)-carboxybiotinyl-L-lysyl-[protein] + acetyl-CoA = N(6)-biotinyl-L-lysyl-[protein] + malonyl-CoA. The protein operates within lipid metabolism; malonyl-CoA biosynthesis; malonyl-CoA from acetyl-CoA: step 1/1. In terms of biological role, component of the acetyl coenzyme A carboxylase (ACC) complex. Biotin carboxylase (BC) catalyzes the carboxylation of biotin on its carrier protein (BCCP) and then the CO(2) group is transferred by the transcarboxylase to acetyl-CoA to form malonyl-CoA. The polypeptide is Acetyl-coenzyme A carboxylase carboxyl transferase subunit beta (Opitutus terrae (strain DSM 11246 / JCM 15787 / PB90-1)).